The chain runs to 564 residues: NAD-dependent malic enzyme (564 aa).

Catalysis depends on Tyr102, which acts as the Proton donor. NAD(+) is bound at residue Arg155. Lys173 acts as the Proton acceptor in catalysis. Residues Glu244, Asp245, and Asp268 each coordinate a divalent metal cation. Residues Asp268 and Asn417 each contribute to the NAD(+) site.

The protein belongs to the malic enzymes family. In terms of assembly, homotetramer. Mg(2+) is required as a cofactor. Mn(2+) serves as cofactor.

The enzyme catalyses (S)-malate + NAD(+) = pyruvate + CO2 + NADH. The catalysed reaction is oxaloacetate + H(+) = pyruvate + CO2. In Pseudomonas aeruginosa (strain ATCC 15692 / DSM 22644 / CIP 104116 / JCM 14847 / LMG 12228 / 1C / PRS 101 / PAO1), this protein is NAD-dependent malic enzyme.